The primary structure comprises 514 residues: 2-isopropylmalate synthase (514 aa).

The Pyruvate carboxyltransferase domain occupies 5–268 (LIIFDTTLRD…DVGIDTSQIV (264 aa)). The Mn(2+) site is built by D14, H202, H204, and N239. The regulatory domain stretch occupies residues 395 to 514 (KFVSLSQHSE…KDDKVNPQRS (120 aa)).

This sequence belongs to the alpha-IPM synthase/homocitrate synthase family. LeuA type 1 subfamily. In terms of assembly, homodimer. Mn(2+) serves as cofactor.

It is found in the cytoplasm. It catalyses the reaction 3-methyl-2-oxobutanoate + acetyl-CoA + H2O = (2S)-2-isopropylmalate + CoA + H(+). The protein operates within amino-acid biosynthesis; L-leucine biosynthesis; L-leucine from 3-methyl-2-oxobutanoate: step 1/4. In terms of biological role, catalyzes the condensation of the acetyl group of acetyl-CoA with 3-methyl-2-oxobutanoate (2-ketoisovalerate) to form 3-carboxy-3-hydroxy-4-methylpentanoate (2-isopropylmalate). The polypeptide is 2-isopropylmalate synthase (Burkholderia lata (strain ATCC 17760 / DSM 23089 / LMG 22485 / NCIMB 9086 / R18194 / 383)).